A 1083-amino-acid polypeptide reads, in one-letter code: MPAMRGLLAPQNTFLDTIATRFDGTHSNFVLGNAQVAGLFPVVYCSDGFCDLTGFSRAEVMQRGCACSFLYGPDTSELVRQQIRKALDEHKEFKAELILYRKSGLPFWCLLDVIPIKNEKGEVALFLVSHKDISETKNRGGPDRWKETGGGRRRYGRARSKGFNANRRRSRAVLYHLSGHLQKQPKGKHKLNKGVFGEKPNLPEYKVAAIRKSPFILLHCGALRATWDGFILLATLYVAVTVPYSVCVSTAREPSAARGPPSVCDLAVEVLFILDIVLNFRTTFVSKSGQVVFAPKSICLHYVTTWFLLDVIAALPFDLLHAFKVNVYFGAHLLKTVRLLRLLRLLPRLDRYSQYSAVVLTLLMAVFALLAHWVACVWFYIGQREIESSESELPEIGWLQELARRLETPYYLVGRRPAGGNSSGQSDNCSSSSEANGTGLELLGGPSLRSAYITSLYFALSSLTSVGFGNVSANTDTEKIFSICTMLIGALMHAVVFGNVTAIIQRMYARRFLYHSRTRDLRDYIRIHRIPKPLKQRMLEYFQATWAVNNGIDTTELLQSLPDELRADIAMHLHKEVLQLPLFEAASRGCLRALSLALRPAFCTPGEYLIHQGDALQALYFVCSGSMEVLKGGTVLAILGKGDLIGCELPRREQVVKANADVKGLTYCVLQCLQLAGLHDSLALYPEFAPRFSRGLRGELSYNLGAGGGSAEVDTSSLSGDNTLMSTLEEKETDGEQGPTVSPAPADEPSSPLLSPGCTSSSSAAKLLSPRRTAPRPRLGGRGRPGRAGALKAEAGPSAPPRALEGLRLPPMPWNVPPDLSPRVVDGIEDGCGSDQPKFSFRVGQSGPECSSSPSPGPESGLLTVPHGPSEARNTDTLDKLRQAVTELSEQVLQMREGLQSLRQAVQLVLAPHREGPCPRASGEGPCPASTSGLLQPLCVDTGASSYCLQPPAGSVLSGTWPHPRPGPPPLMAPWPWGPPASQSSPWPRATAFWTSTSDSEPPASGDLCSEPSTPASPPPSEEGARTGPAEPVSQAEATSTGEPPPGSGGLALPWDPHSLEMVLIGCHGSGTVQWTQEEGTGV.

The Cytoplasmic segment spans residues 1 to 228; the sequence is MPAMRGLLAP…HCGALRATWD (228 aa). The PAS domain occupies 18–90; it reads IATRFDGTHS…QQIRKALDEH (73 aa). Residues 93–145 form the PAC domain; that stretch reads FKAELILYRKSGLPFWCLLDVIPIKNEKGEVALFLVSHKDISETKNRGGPDRW. The span at 137 to 150 shows a compositional bias: basic and acidic residues; that stretch reads KNRGGPDRWKETGG. Positions 137 to 157 are disordered; that stretch reads KNRGGPDRWKETGGGRRRYGR. The helical transmembrane segment at 229-249 threads the bilayer; sequence GFILLATLYVAVTVPYSVCVS. Over 250 to 259 the chain is Extracellular; it reads TAREPSAARG. Residues 260-280 traverse the membrane as a helical segment; it reads PPSVCDLAVEVLFILDIVLNF. The Cytoplasmic portion of the chain corresponds to 281-302; that stretch reads RTTFVSKSGQVVFAPKSICLHY. Residues 303 to 323 traverse the membrane as a helical segment; the sequence is VTTWFLLDVIAALPFDLLHAF. Over 324–331 the chain is Extracellular; that stretch reads KVNVYFGA. The helical; Voltage-sensor transmembrane segment at 332-352 threads the bilayer; that stretch reads HLLKTVRLLRLLRLLPRLDRY. At 353 to 361 the chain is on the cytoplasmic side; it reads SQYSAVVLT. Residues 362 to 382 traverse the membrane as a helical segment; it reads LLMAVFALLAHWVACVWFYIG. The Extracellular portion of the chain corresponds to 383 to 453; it reads QREIESSESE…GGPSLRSAYI (71 aa). N-linked (GlcNAc...) asparagine glycans are attached at residues N421, N428, and N436. An intramembrane region (pore-forming) is located at residues 454–474; the sequence is TSLYFALSSLTSVGFGNVSAN. The short motif at 465–470 is the Selectivity filter element; it reads SVGFGN. At 475–479 the chain is on the extracellular side; sequence TDTEK. The chain crosses the membrane as a helical span at residues 480-500; sequence IFSICTMLIGALMHAVVFGNV. Residues 501–1083 are Cytoplasmic-facing; sequence TAIIQRMYAR…QWTQEEGTGV (583 aa). Residue 582–697 coordinates a nucleoside 3',5'-cyclic phosphate; the sequence is LFEAASRGCL…FAPRFSRGLR (116 aa). Disordered regions lie at residues 729–810, 832–873, and 972–1055; these read EEKE…LRLP, CGSD…SEAR, and MAPW…ALPW. Residues 773–785 show a composition bias toward basic residues; the sequence is TAPRPRLGGRGRP. The span at 844-861 shows a compositional bias: low complexity; that stretch reads GQSGPECSSSPSPGPESG.

Belongs to the potassium channel family. H (Eag) (TC 1.A.1.20) subfamily. Kv12.2/KCNH3 sub-subfamily. The potassium channel is probably composed of a homo- or heterotetrameric complex of pore-forming alpha subunits that can associate with modulating beta subunits. Interacts with KCNE1 and KCNE3; these interactions regulate KCNH3 trafficking to the plasma membrane and its subsequent voltage-gated potassium channel activity. N-glycosylated. N-glycosylation mediates traffick to the cell membrane but is not necessary for voltage-gated potassium channel activity. As to expression, detected only in brain, in particular in the telencephalon. Detected in the cerebral cortex, occipital pole, frontal and temporal lobe, putamen, amygdala, hippocampus and caudate nucleus.

Its subcellular location is the cell membrane. It catalyses the reaction K(+)(in) = K(+)(out). Functionally, pore-forming (alpha) subunit of a voltage-gated inwardly rectifying potassium channel. Charactherized by a fast rate of activation during depolarization followed by a rapid inactivation at much more depolarized value causing inward rectification due to a C-type inactivation mechanism. Exhibits a rapid recovery from inactivation. This Homo sapiens (Human) protein is Voltage-gated inwardly rectifying potassium channel KCNH3.